Consider the following 499-residue polypeptide: Probable cytosol aminopeptidase (499 aa).

Positions 262 and 267 each coordinate Mn(2+). The active site involves K274. Residues D285, D344, and E346 each coordinate Mn(2+). The active site involves R348.

The protein belongs to the peptidase M17 family. Mn(2+) serves as cofactor.

It is found in the cytoplasm. The catalysed reaction is Release of an N-terminal amino acid, Xaa-|-Yaa-, in which Xaa is preferably Leu, but may be other amino acids including Pro although not Arg or Lys, and Yaa may be Pro. Amino acid amides and methyl esters are also readily hydrolyzed, but rates on arylamides are exceedingly low.. It catalyses the reaction Release of an N-terminal amino acid, preferentially leucine, but not glutamic or aspartic acids.. Its function is as follows. Presumably involved in the processing and regular turnover of intracellular proteins. Catalyzes the removal of unsubstituted N-terminal amino acids from various peptides. This Protochlamydia amoebophila (strain UWE25) protein is Probable cytosol aminopeptidase.